Consider the following 1196-residue polypeptide: MAGHDIKYGKHRTRRSFSRIKEVIGLPNLIEVQTLSYKNFLDEGLANVFKEMFPIDNFAGTMELEFVGYEMKTPKYTVEEARAHDANYSAPIYVTFRLVNKETGELKTQEVFFGDFPLMTEMGTFINNGSERLIVSQLVRSPGSYFHLKTDKNGLESFGHTTIPNRGAWFELDTDAKGIGYVRIDRTRKLTFTTMLRALGFGSDDEILELLGETQLLTDTIAKDVHKNPADTRVEEALKDIYDRLRPGEPKTADSSRGLLVARFFDPKRYDFAPVGRYKFNKKLALKNRLLGLTLAEPIVDPETGEILVNTDTLVTRDVLDLIEPLLDNGLGNFVVEPSDDAVIPEPITLQSIKVYSPKDSERVVTLLSNGNPDSECRVLTPADVISNISYWLGLAEGIGKVDDIDHLGNRRIRSVGELLQNQVRIGLSRMERVIRERMSSSENENITPQGLINIRPVTASIKEFFGSSQLSQFMDQHNPLSELSHKRRFSALGPGGISRDRASYEVRDVHYTHYGRMCPIETPEGPNIGLINNLSSYAKVNEYGFIMSPYRRVDRVNGIVTDEVEYLTADEEDNYTVAQANSPLTDDSRFANETVMARHTGNNIEVEASTADYMDVSPKQVIAVAAACIPFLENDDSNRALMGANMQRQAVPLIDPHAPWIGTGMEHQTARDSGAALLAKHAGVVEYVDGNEIRVRRTSGELDIYNITKYRRSNSGTSYNQRPLARLGEKVEKNDIIADGPSMENGEMALGQNPLVAYMTWEGYNFEDAVIMSERLIKDDVYTSIAIEEYESETRDTKLGPEEITREIPNVGDEALKNLDESGIIRIGAEVKDGDLLVGKVTPKGETDPTPEERLLRAIFGEKAREVRDTSLRVPHGGGGIVHDVRVFTRENGDELPSGVNKLVRVFIAQKRKIHVGDKMAGRHGNKGVVSNIVPVEDMPYLPDGTPIDIMLNPLGVPSRMNIGQVMELHLGMAARTLGIHIATPVFDGASDEDIWDTVKEAGMAADAKTVLYDGRTGEPFDNRISVGVMYMIKLHHMVDDKLHARSVGPYSLVTQQPLGGKAQFGGQRFGEMEVWALEAYGAANVLQEILTYKSDDVIGRTRAYEAIVKGERIPKPGLPESFRVLVKELQSLGLDMKVFDADRNVLDLRELDEDEVMTRPDNTEITPEMLEAQEAIVAQAEAEEEALINADIEK.

This sequence belongs to the RNA polymerase beta chain family. The RNAP catalytic core consists of 2 alpha, 1 beta, 1 beta' and 1 omega subunit. When a sigma factor is associated with the core the holoenzyme is formed, which can initiate transcription.

The enzyme catalyses RNA(n) + a ribonucleoside 5'-triphosphate = RNA(n+1) + diphosphate. In terms of biological role, DNA-dependent RNA polymerase catalyzes the transcription of DNA into RNA using the four ribonucleoside triphosphates as substrates. The chain is DNA-directed RNA polymerase subunit beta from Lactococcus lactis subsp. cremoris (strain SK11).